The chain runs to 208 residues: MTFLSTSAFSPLAFSLGLLLVVATAFPTPGPLGGDATSNRLPLTSADKMEELIKYILGKISALKKEMCDNYNKCEDSKEALAENNLNLPKLAEKDGCFQSGFNQETCLTRITTGLQEFQIYLKFLQDKYEGDEENAKSVYTSTNVLLQMLKRKGKNQDEVTIPVPTVEVGLQAKLQSQEEWLRHTTIHLTLRRLEDFLQFSLRAVRIM.

The signal sequence occupies residues 1-27 (MTFLSTSAFSPLAFSLGLLLVVATAFP). A disulfide bond links Cys68 and Cys74. The residue at position 77 (Ser77) is a Phosphoserine. Cys97 and Cys107 form a disulfide bridge.

This sequence belongs to the IL-6 superfamily. As to quaternary structure, component of a hexamer of two molecules each of IL6, IL6R and IL6ST; first binds to IL6R to associate with the signaling subunit IL6ST. Interacts with IL6R (via the N-terminal ectodomain); this interaction may be affected by IL6R-binding with SORL1, hence decreasing IL6 cis signaling. Interacts with SORL1 (via the N-terminal ectodomain); this interaction leads to IL6 internalization and lysosomal degradation. May form a trimeric complex with the soluble SORL1 ectodomain and soluble IL6R receptor; this interaction might stabilize circulating IL6, hence promoting IL6 trans signaling.

The protein resides in the secreted. Cytokine with a wide variety of biological functions in immunity, tissue regeneration, and metabolism. Binds to IL6R, then the complex associates to the signaling subunit IL6ST/gp130 to trigger the intracellular IL6-signaling pathway. The interaction with the membrane-bound IL6R and IL6ST stimulates 'classic signaling', whereas the binding of IL6 and soluble IL6R to IL6ST stimulates 'trans-signaling'. Alternatively, 'cluster signaling' occurs when membrane-bound IL6:IL6R complexes on transmitter cells activate IL6ST receptors on neighboring receiver cells. In terms of biological role, IL6 is a potent inducer of the acute phase response. Rapid production of IL6 contributes to host defense during infection and tissue injury, but excessive IL6 synthesis is involved in disease pathology. In the innate immune response, is synthesized by myeloid cells, such as macrophages and dendritic cells, upon recognition of pathogens through toll-like receptors (TLRs) at the site of infection or tissue injury. In the adaptive immune response, is required for the differentiation of B cells into immunoglobulin-secreting cells. Plays a major role in the differentiation of CD4(+) T cell subsets. Essential factor for the development of T follicular helper (Tfh) cells that are required for the induction of germinal-center formation. Required to drive naive CD4(+) T cells to the Th17 lineage. Also required for proliferation of myeloma cells and the survival of plasmablast cells. Its function is as follows. Acts as an essential factor in bone homeostasis and on vessels directly or indirectly by induction of VEGF, resulting in increased angiogenesis activity and vascular permeability. Induces, through 'trans-signaling' and synergistically with IL1B and TNF, the production of VEGF. Involved in metabolic controls, is discharged into the bloodstream after muscle contraction increasing lipolysis and improving insulin resistance. 'Trans-signaling' in central nervous system also regulates energy and glucose homeostasis. Mediates, through GLP-1, crosstalk between insulin-sensitive tissues, intestinal L cells and pancreatic islets to adapt to changes in insulin demand. Also acts as a myokine. Plays a protective role during liver injury, being required for maintenance of tissue regeneration. Also has a pivotal role in iron metabolism by regulating HAMP/hepcidin expression upon inflammation or bacterial infection. Through activation of IL6ST-YAP-NOTCH pathway, induces inflammation-induced epithelial regeneration. This chain is Interleukin-6 (IL6), found in Felis catus (Cat).